The sequence spans 644 residues: UvrABC system protein C (644 aa).

The GIY-YIG domain occupies 47–125 (ARPGVYRMLD…IKRYRPPYNV (79 aa)). In terms of domain architecture, UVR spans 235-270 (TAVQKRLGEAMTRAADAMDFEQAAVLRDRLKALTFI).

The protein belongs to the UvrC family. In terms of assembly, interacts with UvrB in an incision complex.

It is found in the cytoplasm. Functionally, the UvrABC repair system catalyzes the recognition and processing of DNA lesions. UvrC both incises the 5' and 3' sides of the lesion. The N-terminal half is responsible for the 3' incision and the C-terminal half is responsible for the 5' incision. This Sphingopyxis alaskensis (strain DSM 13593 / LMG 18877 / RB2256) (Sphingomonas alaskensis) protein is UvrABC system protein C.